A 226-amino-acid chain; its full sequence is ATP-dependent dethiobiotin synthetase BioD (226 aa).

12–17 is an ATP binding site; it reads GVGKTV. Thr-16 provides a ligand contact to Mg(2+). Lys-37 is a catalytic residue. Residue Thr-41 coordinates substrate. Residues Asp-49, 108–111, and 197–199 each bind ATP; these read EGAG and PAG. Mg(2+) is bound by residues Asp-49 and Glu-108.

Belongs to the dethiobiotin synthetase family. As to quaternary structure, homodimer. Mg(2+) serves as cofactor.

The protein resides in the cytoplasm. The enzyme catalyses (7R,8S)-7,8-diammoniononanoate + CO2 + ATP = (4R,5S)-dethiobiotin + ADP + phosphate + 3 H(+). The protein operates within cofactor biosynthesis; biotin biosynthesis; biotin from 7,8-diaminononanoate: step 1/2. Catalyzes a mechanistically unusual reaction, the ATP-dependent insertion of CO2 between the N7 and N8 nitrogen atoms of 7,8-diaminopelargonic acid (DAPA, also called 7,8-diammoniononanoate) to form a ureido ring. This chain is ATP-dependent dethiobiotin synthetase BioD, found in Mycobacterium avium (strain 104).